The chain runs to 101 residues: Venom protein 214 (101 aa).

Residues 1–16 (MIRYVLVIITCFLVAA) form the signal peptide.

Contains 3 disulfide bonds. In terms of tissue distribution, expressed by the venom gland.

It is found in the secreted. The protein is Venom protein 214 of Lychas mucronatus (Chinese swimming scorpion).